Reading from the N-terminus, the 333-residue chain is Tetraacyldisaccharide 4'-kinase (333 aa).

55-62 (TAGGNGKT) provides a ligand contact to ATP.

This sequence belongs to the LpxK family.

It catalyses the reaction a lipid A disaccharide + ATP = a lipid IVA + ADP + H(+). It functions in the pathway glycolipid biosynthesis; lipid IV(A) biosynthesis; lipid IV(A) from (3R)-3-hydroxytetradecanoyl-[acyl-carrier-protein] and UDP-N-acetyl-alpha-D-glucosamine: step 6/6. Functionally, transfers the gamma-phosphate of ATP to the 4'-position of a tetraacyldisaccharide 1-phosphate intermediate (termed DS-1-P) to form tetraacyldisaccharide 1,4'-bis-phosphate (lipid IVA). This is Tetraacyldisaccharide 4'-kinase from Pectobacterium carotovorum subsp. carotovorum (strain PC1).